Here is a 325-residue protein sequence, read N- to C-terminus: Elongation factor P--(R)-beta-lysine ligase (325 aa).

Ser76–Glu78 is a binding site for substrate. Residues Arg100–Glu102 and Asn109 each bind ATP. Residue Tyr118 coordinates substrate. Residue Glu244–Leu245 participates in ATP binding. A substrate-binding site is contributed by Glu251. Gly300 is a binding site for ATP.

It belongs to the class-II aminoacyl-tRNA synthetase family. EpmA subfamily. In terms of assembly, homodimer.

The enzyme catalyses D-beta-lysine + L-lysyl-[protein] + ATP = N(6)-((3R)-3,6-diaminohexanoyl)-L-lysyl-[protein] + AMP + diphosphate + H(+). Functionally, with EpmB is involved in the beta-lysylation step of the post-translational modification of translation elongation factor P (EF-P). Catalyzes the ATP-dependent activation of (R)-beta-lysine produced by EpmB, forming a lysyl-adenylate, from which the beta-lysyl moiety is then transferred to the epsilon-amino group of a conserved specific lysine residue in EF-P. This chain is Elongation factor P--(R)-beta-lysine ligase, found in Photorhabdus laumondii subsp. laumondii (strain DSM 15139 / CIP 105565 / TT01) (Photorhabdus luminescens subsp. laumondii).